Consider the following 136-residue polypeptide: Probable flagellum biosynthesis repressor protein FlbT 2 (136 aa).

The protein belongs to the FlbT family.

Functionally, has a post-transcriptional repressor function in flagellum biogenesis. Associates with the 5'-UTR of fljK mRNA and promotes its degradation. This is Probable flagellum biosynthesis repressor protein FlbT 2 from Bradyrhizobium diazoefficiens (strain JCM 10833 / BCRC 13528 / IAM 13628 / NBRC 14792 / USDA 110).